An 89-amino-acid polypeptide reads, in one-letter code: MGIKLINIGFGNIVSANRLVAIVSPESAPIKRIIQEARDRGMLIDATYGRRTRAVIITDSDHVILSAVQPETVAHRLSTKEEVVDEVDE.

It belongs to the RemA family.

This is Putative regulatory protein CLH_1161 from Clostridium botulinum (strain Alaska E43 / Type E3).